Consider the following 103-residue polypeptide: Urease subunit beta (103 aa).

It belongs to the urease beta subunit family. In terms of assembly, heterotrimer of UreA (gamma), UreB (beta) and UreC (alpha) subunits. Three heterotrimers associate to form the active enzyme.

It localises to the cytoplasm. The catalysed reaction is urea + 2 H2O + H(+) = hydrogencarbonate + 2 NH4(+). The protein operates within nitrogen metabolism; urea degradation; CO(2) and NH(3) from urea (urease route): step 1/1. The sequence is that of Urease subunit beta from Blochmanniella floridana.